The chain runs to 485 residues: Noelin (485 aa).

Residues 1–24 (MSVPLLKIGVVLSTMAMITNWMSQ) form the signal peptide. 8 N-linked (GlcNAc...) asparagine glycosylation sites follow: N33, N103, N187, N288, N307, N394, N431, and N473. Residues 87–225 (RDARTKQLRQ…ERLRACMQKL (139 aa)) adopt a coiled-coil conformation. The Olfactomedin-like domain maps to 226–478 (ACGKLTGISD…QTLYNVTLFH (253 aa)). C227 and C409 are disulfide-bonded.

In terms of assembly, homotetramer; disulfide-linked. Dimer of dimers, giving rise to a V-shaped homotretramer. Isoform 1 and isoform 3 interact with RTN4R. Identified in a complex with RTN4R and LINGO1. Peripherally associated with AMPAR complex. AMPAR complex consists of an inner core made of 4 pore-forming GluA/GRIA proteins (GRIA1, GRIA2, GRIA3 and GRIA4) and 4 major auxiliary subunits arranged in a twofold symmetry. One of the two pairs of distinct binding sites is occupied either by CNIH2, CNIH3 or CACNG2, CACNG3. The other harbors CACNG2, CACNG3, CACNG4, CACNG8 or GSG1L. This inner core of AMPAR complex is complemented by outer core constituents binding directly to the GluA/GRIA proteins at sites distinct from the interaction sites of the inner core constituents. Outer core constituents include at least PRRT1, PRRT2, CKAMP44/SHISA9, FRRS1L and NRN1. The proteins of the inner and outer core serve as a platform for other, more peripherally associated AMPAR constituents, including OLFM1. Alone or in combination, these auxiliary subunits control the gating and pharmacology of the AMPAR complex and profoundly impact their biogenesis and protein processing. Interacts with OLFM2. In isoform 3 and isoform 4, the signal peptide is predicted to end in position 17. As to expression, expressed in the brain (at protein level). Expressed in the brain, predominantly in the cortex and hippocampus. In the pituitary only the two A-type and in the adrenal glands only the two B-type forms were detected.

Its subcellular location is the secreted. It is found in the synapse. The protein localises to the endoplasmic reticulum. It localises to the cell projection. The protein resides in the axon. Its subcellular location is the perikaryon. Functionally, contributes to the regulation of axonal growth in the embryonic and adult central nervous system by inhibiting interactions between RTN4R and LINGO1. Inhibits RTN4R-mediated axon growth cone collapse. May play an important role in regulating the production of neural crest cells by the neural tube. May be required for normal responses to olfactory stimuli. The chain is Noelin (Olfm1) from Rattus norvegicus (Rat).